Here is an 821-residue protein sequence, read N- to C-terminus: Leucine--tRNA ligase (821 aa).

The 'HIGH' region motif lies at 44 to 54 (PYPSGRIHMGH). A 'KMSKS' region motif is present at residues 589–593 (KMSKS). Lys592 is an ATP binding site.

Belongs to the class-I aminoacyl-tRNA synthetase family.

The protein localises to the cytoplasm. The enzyme catalyses tRNA(Leu) + L-leucine + ATP = L-leucyl-tRNA(Leu) + AMP + diphosphate. The chain is Leucine--tRNA ligase from Campylobacter curvus (strain 525.92).